Reading from the N-terminus, the 354-residue chain is Selection and upkeep of intraepithelial T-cells protein 10 (354 aa).

The N-terminal stretch at 1 to 52 (MFLRTQMEQSQADIFALIKPHFGVMESSASYLPGFFMTFLLLQTTVLTQAMS) is a signal peptide. The Ig-like V-type domain maps to 53 to 141 (LDIQINIQVP…TNREKKRSVV (89 aa)). Over 53–158 (LDIQINIQVP…SEYMSLMSNK (106 aa)) the chain is Extracellular. An intrachain disulfide couples cysteine 71 to cysteine 125. N-linked (GlcNAc...) asparagine glycosylation occurs at asparagine 129. Residues 159–179 (FSCPLTYLFIIIFLNCLKGML) form a helical membrane-spanning segment. Residues 180–209 (DFCCLKGKPVYFRELINKIKEVLNIKMRAC) lie on the Cytoplasmic side of the membrane. A helical membrane pass occupies residues 210-230 (CTLIWEFLLIVLYIAFLPFYL). Over 231–252 (KFRSRASILDDAYPLHSNWLWD) the chain is Extracellular. Residues 253-273 (ICIVLSVLMIFFTGLSLFLLW) traverse the membrane as a helical segment. The Cytoplasmic segment spans residues 274–354 (TLNCYGQMSY…RLDCSLNWKT (81 aa)).

The protein belongs to the SKINT family. As to expression, expressed in skin and thymus.

Its subcellular location is the membrane. May act by engaging a cell surface molecule on immature T-cells in the embryonic thymus. This chain is Selection and upkeep of intraepithelial T-cells protein 10 (Skint10), found in Mus musculus (Mouse).